Reading from the N-terminus, the 233-residue chain is RNA/RNP complex-1-interacting phosphatase homolog (233 aa).

Residues 1-14 (MSNYHHNHNYQHRP) are compositionally biased toward basic residues. The disordered stretch occupies residues 1–21 (MSNYHHNHNYQHRPRGYERLP). The region spanning 34 to 206 (NVGRDIDGTR…LYEAERKKKY (173 aa)) is the Tyrosine-protein phosphatase domain. Cys-150 serves as the catalytic Phosphocysteine intermediate. Substrate is bound at residue 151-156 (THGLNR). Arg-156 functions as the Proton donor/acceptor in the catalytic mechanism. The interval 204 to 233 (KKYGKSSGKSSGNSADSTISSEQLHRNNSQ) is disordered. The span at 208–217 (KSSGKSSGNS) shows a compositional bias: low complexity. Over residues 218–233 (ADSTISSEQLHRNNSQ) the composition is skewed to polar residues.

Belongs to the protein-tyrosine phosphatase family. Non-receptor class dual specificity subfamily. As to quaternary structure, interacts with the ERI/DICER complex component dcr-1. Interacts with ERI/DICER complex components rrf-3 and isoform b of eri-1. Interacts with drh-3 and rde-8.

Its subcellular location is the cytoplasm. It is found in the nucleus. Its function is as follows. RNA polyphosphatase which has RNA 5'-triphosphatase and diphosphatase activities. Displays poor protein-tyrosine phosphatase activity. Binds to 5'-triphosphorylated RNAs (also called ppp-RNAs). Dephosphorylates ppp-RNAs converting them to 5'-monophosphorylated RNAs (also called p-RNAs). During small-RNA-mediated gene-silencing or RNA interference (RNAi), involved in the dcr-1-mediated processing of an amplified dsRNA intermediate. This is most likely in association with several components of the ERI/DICER complex including dcr-1, eri-1 and rrf-3. Plays a role in the biogenesis of 26G small interfering RNAs (26G-siRNAs), which are a class of 26 nucleotide siRNAs that possess a guanine residue at the 5'-end, by dephosphorylating 5'-triphosphorylated 26G-siRNAs prior to their maturation by the ERI/DICER complex. Plays a role in the biogenesis of csr-1-bound 22G small interfering RNAs (22G-siRNAs), which are a class of 22 nucleotide siRNAs that possess a guanine residue at the 5'-end. Not required for the biogenesis of microRNAs (miRNA) or for the biogenesis of a class of 21 nucleotide PIWI-interacting RNAs (piRNAs) that possess a uracil residue at the 5'-end (also called 21U-RNAs). The protein is RNA/RNP complex-1-interacting phosphatase homolog of Caenorhabditis elegans.